Here is a 360-residue protein sequence, read N- to C-terminus: Magnesium transporter NIPA2 (360 aa).

The Extracellular segment spans residues 1-9 (MSQGRGKYD). A helical transmembrane segment spans residues 10–30 (FYIGLGLAMSSSIFIGGSFIL). Residues 31 to 56 (KKKGLLRLARKGSMRAGQGGHAYLKE) lie on the Cytoplasmic side of the membrane. A helical transmembrane segment spans residues 57–77 (WLWWAGLLSMGAGEVANFAAY). Residue Ala78 is a topological domain, extracellular. A helical transmembrane segment spans residues 79-99 (FAPATLVTPLGALSVLVSAIL). Topologically, residues 100–107 (SSYFLNER) are cytoplasmic. A helical transmembrane segment spans residues 108-128 (LNLHGKIGCLLSILGSTVMVI). Topologically, residues 129–149 (HAPKEEEIETLNEMSHKLGDP) are extracellular. Residues 150–170 (GFVVFATLVVIVALILIFVVG) form a helical membrane-spanning segment. Residues 171–175 (PRHGQ) are Cytoplasmic-facing. Residues 176–196 (TNILVYITICSVIGAFSVSCV) traverse the membrane as a helical segment. Topologically, residues 197–215 (KGLGIAIKELFAGKPVLRH) are extracellular. A helical transmembrane segment spans residues 216–236 (PLAWILLLSLIVCVSTQINYL). The Cytoplasmic segment spans residues 237–246 (NRALDIFNTS). The helical transmembrane segment at 247–267 (IVTPIYYVFFTTSVLTCSAIL) threads the bilayer. At 268–278 (FKEWQDMPVDD) the chain is on the extracellular side. The chain crosses the membrane as a helical span at residues 279–299 (VIGTLSGFFTIIVGIFLLHAF). The Cytoplasmic portion of the chain corresponds to 300 to 360 (KDVSFSLASL…SRRNGNLTAF (61 aa)).

It belongs to the NIPA family. In terms of tissue distribution, widely expressed.

The protein localises to the cell membrane. It localises to the early endosome. It catalyses the reaction Mg(2+)(in) = Mg(2+)(out). In terms of biological role, acts as a selective Mg(2+) transporter. The protein is Magnesium transporter NIPA2 (NIPA2) of Homo sapiens (Human).